A 396-amino-acid polypeptide reads, in one-letter code: S-adenosylmethionine synthase (396 aa).

His16 is an ATP binding site. A Mg(2+)-binding site is contributed by Asp18. K(+) is bound at residue Glu44. The L-methionine site is built by Glu57 and Gln100. Residues 100 to 110 are flexible loop; the sequence is QSPDIAQGVDR. ATP contacts are provided by residues 167–169, 232–233, Asp241, 247–248, Ala264, and Lys268; these read DAK, RF, and RK. Asp241 is an L-methionine binding site. Lys272 lines the L-methionine pocket.

It belongs to the AdoMet synthase family. As to quaternary structure, homotetramer; dimer of dimers. Requires Mg(2+) as cofactor. K(+) is required as a cofactor.

It localises to the cytoplasm. It catalyses the reaction L-methionine + ATP + H2O = S-adenosyl-L-methionine + phosphate + diphosphate. Its pathway is amino-acid biosynthesis; S-adenosyl-L-methionine biosynthesis; S-adenosyl-L-methionine from L-methionine: step 1/1. In terms of biological role, catalyzes the formation of S-adenosylmethionine (AdoMet) from methionine and ATP. The overall synthetic reaction is composed of two sequential steps, AdoMet formation and the subsequent tripolyphosphate hydrolysis which occurs prior to release of AdoMet from the enzyme. The protein is S-adenosylmethionine synthase of Ralstonia pickettii (strain 12J).